Here is a 520-residue protein sequence, read N- to C-terminus: Glutamate--cysteine ligase (520 aa).

Belongs to the glutamate--cysteine ligase type 1 family. Type 1 subfamily.

The catalysed reaction is L-cysteine + L-glutamate + ATP = gamma-L-glutamyl-L-cysteine + ADP + phosphate + H(+). It participates in sulfur metabolism; glutathione biosynthesis; glutathione from L-cysteine and L-glutamate: step 1/2. The protein is Glutamate--cysteine ligase of Leptospira interrogans serogroup Icterohaemorrhagiae serovar Lai (strain 56601).